Reading from the N-terminus, the 250-residue chain is Proteasome subunit alpha (250 aa).

This sequence belongs to the peptidase T1A family. In terms of assembly, the 20S proteasome core is composed of 14 alpha and 14 beta subunits that assemble into four stacked heptameric rings, resulting in a barrel-shaped structure. The two inner rings, each composed of seven catalytic beta subunits, are sandwiched by two outer rings, each composed of seven alpha subunits. The catalytic chamber with the active sites is on the inside of the barrel. Has a gated structure, the ends of the cylinder being occluded by the N-termini of the alpha-subunits. Is capped at one or both ends by the proteasome regulatory ATPase, PAN.

The protein localises to the cytoplasm. With respect to regulation, the formation of the proteasomal ATPase PAN-20S proteasome complex, via the docking of the C-termini of PAN into the intersubunit pockets in the alpha-rings, triggers opening of the gate for substrate entry. Interconversion between the open-gate and close-gate conformations leads to a dynamic regulation of the 20S proteasome proteolysis activity. Component of the proteasome core, a large protease complex with broad specificity involved in protein degradation. This Haloquadratum walsbyi (strain DSM 16790 / HBSQ001) protein is Proteasome subunit alpha.